A 322-amino-acid chain; its full sequence is Ribose-phosphate pyrophosphokinase (322 aa).

ATP is bound by residues 43-45 and 102-103; these read DGE and RQ. Mg(2+) contacts are provided by histidine 137 and aspartate 177. Lysine 201 is an active-site residue. D-ribose 5-phosphate contacts are provided by residues arginine 203, aspartate 227, and 231-235; that span reads DTAGT.

Belongs to the ribose-phosphate pyrophosphokinase family. Class I subfamily. In terms of assembly, homohexamer. The cofactor is Mg(2+).

It localises to the cytoplasm. The enzyme catalyses D-ribose 5-phosphate + ATP = 5-phospho-alpha-D-ribose 1-diphosphate + AMP + H(+). It participates in metabolic intermediate biosynthesis; 5-phospho-alpha-D-ribose 1-diphosphate biosynthesis; 5-phospho-alpha-D-ribose 1-diphosphate from D-ribose 5-phosphate (route I): step 1/1. Its function is as follows. Involved in the biosynthesis of the central metabolite phospho-alpha-D-ribosyl-1-pyrophosphate (PRPP) via the transfer of pyrophosphoryl group from ATP to 1-hydroxyl of ribose-5-phosphate (Rib-5-P). This Xylella fastidiosa (strain 9a5c) protein is Ribose-phosphate pyrophosphokinase.